Consider the following 493-residue polypeptide: Mitochondrial distribution and morphology protein 10 (493 aa).

Belongs to the MDM10 family. As to quaternary structure, component of the ER-mitochondria encounter structure (ERMES) or MDM complex, composed of MMM1, MDM10, MDM12 and MDM34. Associates with the mitochondrial outer membrane sorting assembly machinery SAM(core) complex, which consists of SAM35, SAM37 and SAM50, to form a SAM(holo) complex.

It localises to the mitochondrion outer membrane. Its function is as follows. Component of the ERMES/MDM complex, which serves as a molecular tether to connect the endoplasmic reticulum and mitochondria. Components of this complex are involved in the control of mitochondrial shape and protein biogenesis and may function in phospholipid exchange. MDM10 is involved in the late assembly steps of the general translocase of the mitochondrial outer membrane (TOM complex). Functions in the TOM40-specific route of the assembly of outer membrane beta-barrel proteins, including the association of TOM40 with the receptor TOM22 and small TOM proteins. Can associate with the SAM(core) complex as well as the MDM12-MMM1 complex, both involved in late steps of the major beta-barrel assembly pathway, that is responsible for biogenesis of all outer membrane beta-barrel proteins. May act as a switch that shuttles between both complexes and channels precursor proteins into the TOM40-specific pathway. Plays a role in mitochondrial morphology and in the inheritance of mitochondria. This chain is Mitochondrial distribution and morphology protein 10, found in Saccharomyces cerevisiae (strain ATCC 204508 / S288c) (Baker's yeast).